Here is a 274-residue protein sequence, read N- to C-terminus: tRNA-cytidine(32) 2-sulfurtransferase (274 aa).

A PP-loop motif motif is present at residues 40–45 (SGGKDS). The [4Fe-4S] cluster site is built by Cys115, Cys118, and Cys206.

Belongs to the TtcA family. As to quaternary structure, homodimer. Requires Mg(2+) as cofactor. It depends on [4Fe-4S] cluster as a cofactor.

Its subcellular location is the cytoplasm. The enzyme catalyses cytidine(32) in tRNA + S-sulfanyl-L-cysteinyl-[cysteine desulfurase] + AH2 + ATP = 2-thiocytidine(32) in tRNA + L-cysteinyl-[cysteine desulfurase] + A + AMP + diphosphate + H(+). The protein operates within tRNA modification. In terms of biological role, catalyzes the ATP-dependent 2-thiolation of cytidine in position 32 of tRNA, to form 2-thiocytidine (s(2)C32). The sulfur atoms are provided by the cysteine/cysteine desulfurase (IscS) system. In Azotobacter vinelandii (strain DJ / ATCC BAA-1303), this protein is tRNA-cytidine(32) 2-sulfurtransferase.